The following is a 414-amino-acid chain: Probable elongation factor 1-gamma 1 (414 aa).

The region spanning 1-82 is the GST N-terminal domain; that stretch reads MALVLHTYKG…YVSRLNGDNS (82 aa). The GST C-terminal domain occupies 87-215; it reads SLIEYAQIEQ…VKQTEAVPPI (129 aa). Positions 214-224 are enriched in low complexity; that stretch reads PIASKKAAQPA. The disordered stretch occupies residues 214–260; the sequence is PIASKKAAQPAKPKEEPKKKEAPVAEAPKLAEEEEAPKPKAKNPLDL. The span at 225–236 shows a compositional bias: basic and acidic residues; sequence KPKEEPKKKEAP. One can recognise an EF-1-gamma C-terminal domain in the interval 254 to 414; it reads AKNPLDLLPP…EALLDAKCFK (161 aa).

As to quaternary structure, EF-1 is composed of four subunits: alpha, beta, delta, and gamma.

In terms of biological role, probably plays a role in anchoring the complex to other cellular components. This chain is Probable elongation factor 1-gamma 1, found in Arabidopsis thaliana (Mouse-ear cress).